A 469-amino-acid chain; its full sequence is 3-isopropylmalate dehydratase large subunit (469 aa).

Residues Cys347, Cys408, and Cys411 each contribute to the [4Fe-4S] cluster site.

Belongs to the aconitase/IPM isomerase family. LeuC type 1 subfamily. Heterodimer of LeuC and LeuD. The cofactor is [4Fe-4S] cluster.

The enzyme catalyses (2R,3S)-3-isopropylmalate = (2S)-2-isopropylmalate. It functions in the pathway amino-acid biosynthesis; L-leucine biosynthesis; L-leucine from 3-methyl-2-oxobutanoate: step 2/4. Its function is as follows. Catalyzes the isomerization between 2-isopropylmalate and 3-isopropylmalate, via the formation of 2-isopropylmaleate. This is 3-isopropylmalate dehydratase large subunit from Haemophilus influenzae (strain ATCC 51907 / DSM 11121 / KW20 / Rd).